We begin with the raw amino-acid sequence, 640 residues long: Threonine--tRNA ligase (640 aa).

The TGS domain occupies 1–61; it reads MPVITLPDGS…SNDATLQIIT (61 aa). The segment at 242–533 is catalytic; it reads DHRKIGKQLD…LIEHYAGVFP (292 aa). Cys333, His384, and His510 together coordinate Zn(2+).

This sequence belongs to the class-II aminoacyl-tRNA synthetase family. As to quaternary structure, homodimer. The cofactor is Zn(2+).

It localises to the cytoplasm. It carries out the reaction tRNA(Thr) + L-threonine + ATP = L-threonyl-tRNA(Thr) + AMP + diphosphate + H(+). Functionally, catalyzes the attachment of threonine to tRNA(Thr) in a two-step reaction: L-threonine is first activated by ATP to form Thr-AMP and then transferred to the acceptor end of tRNA(Thr). Also edits incorrectly charged L-seryl-tRNA(Thr). This is Threonine--tRNA ligase from Pseudomonas putida (strain ATCC 700007 / DSM 6899 / JCM 31910 / BCRC 17059 / LMG 24140 / F1).